The sequence spans 310 residues: Putative S-adenosyl-L-methionine-dependent methyltransferase MMAR_0356 (310 aa).

S-adenosyl-L-methionine-binding positions include aspartate 137 and 166-167 (DL).

This sequence belongs to the UPF0677 family.

Exhibits S-adenosyl-L-methionine-dependent methyltransferase activity. The protein is Putative S-adenosyl-L-methionine-dependent methyltransferase MMAR_0356 of Mycobacterium marinum (strain ATCC BAA-535 / M).